Reading from the N-terminus, the 914-residue chain is Serine/threonine-protein kinase MST20 (914 aa).

A compositionally biased stretch (polar residues) spans 1–12 (MDGHSNFTQPSD). 3 disordered regions span residues 1–140 (MDGH…QLQN), 156–184 (NQYS…LTFN), and 251–286 (AMSE…VLRK). Low complexity-rich tracts occupy residues 13 to 26 (TSHA…SSSS), 63 to 72 (RSSTSLRRAP), and 79 to 97 (TPTS…PSSS). Basic and acidic residues predominate over residues 122–136 (ARDRDSDPARNDHGH). Basic residues predominate over residues 156-166 (NQYSAASHRRS). The span at 175–184 (PQSSNSLTFN) shows a compositional bias: polar residues. Over residues 271 to 280 (RYSDETKEPK) the composition is skewed to basic and acidic residues. In terms of domain architecture, CRIB spans 306–319 (ISAPENPVHVTHVG). Residues 408-615 (SPMISPPASP…RHRSRQSNGL (208 aa)) form a disordered region. Low complexity-rich tracts occupy residues 516 to 548 (AYPA…QAQA) and 562 to 576 (QPQA…SQHQ). The span at 577–586 (YSRPTDANGA) shows a compositional bias: polar residues. Over residues 587–596 (QQTQRPQQPQ) the composition is skewed to low complexity. The 252-residue stretch at 634–885 (YRSFTKIGQG…AHDLLRHEFM (252 aa)) folds into the Protein kinase domain. ATP-binding positions include 640–648 (IGQGASGGV) and Lys-663. Asp-753 serves as the catalytic Proton acceptor.

This sequence belongs to the protein kinase superfamily. STE Ser/Thr protein kinase family. STE20 subfamily.

It is found in the cytoplasm. The protein localises to the nucleus. It catalyses the reaction L-seryl-[protein] + ATP = O-phospho-L-seryl-[protein] + ADP + H(+). It carries out the reaction L-threonyl-[protein] + ATP = O-phospho-L-threonyl-[protein] + ADP + H(+). In terms of biological role, MAP4K component of the MAPK pathway required for the mating pheromone response and the regulation of cell polarity and cell cycle. Phosphorylates histone H2B to form H2BS10ph. Is involved in conidiation, aerial hyphal growth and infection-related morphogenesis. This is Serine/threonine-protein kinase MST20 (MST20) from Pyricularia oryzae (strain 70-15 / ATCC MYA-4617 / FGSC 8958) (Rice blast fungus).